A 139-amino-acid chain; its full sequence is Cellular retinoic acid-binding protein 2 (139 aa).

A Nuclear localization signal motif is present at residues 21 to 31; it reads KALGVNMMMRK. Lysine 103 participates in a covalent cross-link: Glycyl lysine isopeptide (Lys-Gly) (interchain with G-Cter in SUMO). 134 to 136 provides a ligand contact to all-trans-retinoate; sequence RVY.

This sequence belongs to the calycin superfamily. Fatty-acid binding protein (FABP) family. In terms of assembly, interacts with importin alpha, RXR and RARA. In terms of processing, sumoylated in response to retinoic acid binding, sumoylation is critical for dissociation from ER and subsequent nuclear translocation.

Its subcellular location is the cytoplasm. The protein localises to the endoplasmic reticulum. The protein resides in the nucleus. Transports retinoic acid to the nucleus. Regulates the access of retinoic acid to the nuclear retinoic acid receptors. The protein is Cellular retinoic acid-binding protein 2 (Crabp2) of Rattus norvegicus (Rat).